The following is a 588-amino-acid chain: Arginine--tRNA ligase (588 aa).

The short motif at 124–134 is the 'HIGH' region element; the sequence is PNVAKPMHVGH.

The protein belongs to the class-I aminoacyl-tRNA synthetase family. As to quaternary structure, monomer.

The protein resides in the cytoplasm. The catalysed reaction is tRNA(Arg) + L-arginine + ATP = L-arginyl-tRNA(Arg) + AMP + diphosphate. The chain is Arginine--tRNA ligase from Maricaulis maris (strain MCS10) (Caulobacter maris).